The sequence spans 175 residues: Small ribosomal subunit protein uS5 (175 aa).

In terms of domain architecture, S5 DRBM spans 11–74; that stretch reads LSEVLVDVNR…QAAKKRMMKV (64 aa).

Belongs to the universal ribosomal protein uS5 family. In terms of assembly, part of the 30S ribosomal subunit. Contacts proteins S4 and S8.

With S4 and S12 plays an important role in translational accuracy. Functionally, located at the back of the 30S subunit body where it stabilizes the conformation of the head with respect to the body. The polypeptide is Small ribosomal subunit protein uS5 (Rickettsia typhi (strain ATCC VR-144 / Wilmington)).